The sequence spans 1085 residues: Error-prone DNA polymerase 2 (1085 aa).

Positions 1040–1066 (AGRGDEFAHGGGGPDSRDRQKPVVPRD) are disordered.

Belongs to the DNA polymerase type-C family. DnaE2 subfamily.

Its subcellular location is the cytoplasm. The enzyme catalyses DNA(n) + a 2'-deoxyribonucleoside 5'-triphosphate = DNA(n+1) + diphosphate. In terms of biological role, DNA polymerase involved in damage-induced mutagenesis and translesion synthesis (TLS). It is not the major replicative DNA polymerase. The polypeptide is Error-prone DNA polymerase 2 (Agrobacterium fabrum (strain C58 / ATCC 33970) (Agrobacterium tumefaciens (strain C58))).